The chain runs to 279 residues: Tryptophan synthase alpha chain (279 aa).

Residues Glu50 and Asp61 each act as proton acceptor in the active site.

The protein belongs to the TrpA family. Tetramer of two alpha and two beta chains.

It carries out the reaction (1S,2R)-1-C-(indol-3-yl)glycerol 3-phosphate + L-serine = D-glyceraldehyde 3-phosphate + L-tryptophan + H2O. It participates in amino-acid biosynthesis; L-tryptophan biosynthesis; L-tryptophan from chorismate: step 5/5. Its function is as follows. The alpha subunit is responsible for the aldol cleavage of indoleglycerol phosphate to indole and glyceraldehyde 3-phosphate. This is Tryptophan synthase alpha chain from Rhizobium meliloti (strain 1021) (Ensifer meliloti).